Reading from the N-terminus, the 178-residue chain is Extracellular fatty acid-binding protein (178 aa).

Residues 1–20 (MRTLALSLALALLCLLHTEA) form the signal peptide. A21 is modified (blocked amino end (Ala)). T43 contributes to the enterobactin binding site. Y72 and K104 together coordinate 1-tetradecanoyl-sn-glycerol 3-phosphate. C80 and C173 are oxidised to a cystine. Enterobactin is bound by residues K104, R123, and R134. 134–136 (RLY) lines the 1-tetradecanoyl-sn-glycerol 3-phosphate pocket.

It belongs to the calycin superfamily. Lipocalin family. In terms of assembly, monomer. Post-translationally, does not seem to be glycosylated. As to expression, expressed in egg white (at protein level). Expressed in the magnum of the oviduct (at protein level). Preferentially synthesized in nonproliferating cells.

It is found in the secreted. Siderocalin-like lipocalin tightly binding a variety of bacterial ferric siderophores, also binds long-chain unsaturated fatty acids such as linoleic acid, oleic acid, arachidonic acid and, with a lower affinity, long chain saturated fatty acids such as steraic acid. May act as an antibacterial factor, through dual ligand specificity, both as a siderophore-sequestrating molecule and a lysophosphatidic acid (LPA) sensor. This Gallus gallus (Chicken) protein is Extracellular fatty acid-binding protein (EXFABP).